We begin with the raw amino-acid sequence, 721 residues long: uncharacterized protein (721 aa).

Disordered stretches follow at residues 196 to 291 (TSMT…VGGP) and 370 to 513 (AGIP…AAEQ). Low complexity-rich tracts occupy residues 202-224 (SPAG…TSGP) and 232-250 (SPFG…SSGP). Pro residues-rich tracts occupy residues 264-283 (PMPP…PPSA) and 379-389 (APTPSPAPIAP). Positions 419–429 (APAGPLPAYGA) are enriched in low complexity. Pro residues predominate over residues 435–446 (VTTPPATPPTPT). The span at 470–484 (VNKSTAPATTQAQPS) shows a compositional bias: polar residues. Residues 491-505 (ASATAAATTGAAAGD) show a composition bias toward low complexity.

This is an uncharacterized protein from Mycobacterium tuberculosis (strain ATCC 25618 / H37Rv).